We begin with the raw amino-acid sequence, 351 residues long: DNA polymerase IV (351 aa).

Residues 4–185 (IIHVDMDCFF…LPLAKIPGVG (182 aa)) form the UmuC domain. The Mg(2+) site is built by D8 and D103. E104 is an active-site residue.

This sequence belongs to the DNA polymerase type-Y family. In terms of assembly, monomer. The cofactor is Mg(2+).

The protein resides in the cytoplasm. The enzyme catalyses DNA(n) + a 2'-deoxyribonucleoside 5'-triphosphate = DNA(n+1) + diphosphate. Its function is as follows. Poorly processive, error-prone DNA polymerase involved in untargeted mutagenesis. Copies undamaged DNA at stalled replication forks, which arise in vivo from mismatched or misaligned primer ends. These misaligned primers can be extended by PolIV. Exhibits no 3'-5' exonuclease (proofreading) activity. May be involved in translesional synthesis, in conjunction with the beta clamp from PolIII. This is DNA polymerase IV from Salmonella choleraesuis (strain SC-B67).